A 78-amino-acid chain; its full sequence is MLVLSRKANESIKIDSNIEISILEIKKDSVKIAIKAPENIKILRSEIYDIIKEENKKSILQDKNNIHKIKKLFDYFSK.

It belongs to the CsrA/RsmA family. In terms of assembly, homodimer; the beta-strands of each monomer intercalate to form a hydrophobic core, while the alpha-helices form wings that extend away from the core.

The protein resides in the cytoplasm. Functionally, a translational regulator that binds mRNA to regulate translation initiation and/or mRNA stability. Usually binds in the 5'-UTR at or near the Shine-Dalgarno sequence preventing ribosome-binding, thus repressing translation. Its main target seems to be the major flagellin gene, while its function is anatagonized by FliW. The polypeptide is Translational regulator CsrA (Borrelia recurrentis (strain A1)).